The primary structure comprises 671 residues: Leucine aminopeptidase 2 (671 aa).

Residues 184–186 (QLE) and 311–316 (PYGGME) each bind substrate. Position 340 (histidine 340) interacts with Zn(2+). Glutamate 341 acts as the Proton acceptor in catalysis. Zn(2+) contacts are provided by histidine 344 and glutamate 363. Tyrosine 429 (proton donor) is an active-site residue.

Belongs to the peptidase M1 family. Requires Zn(2+) as cofactor.

It is found in the cytoplasm. Its subcellular location is the nucleus. The catalysed reaction is an epoxide + H2O = an ethanediol. Its activity is regulated as follows. Inhibited by 3-(4-benzyloxyphenyl)-2-(R)-amino-1-propanethiol (thioamine) and N-hydroxy-N-(2-(S)-amino-3-(4-benzyloxyphenyl)propyl)-5-carboxypen-tanamide (hydroxamic acid). The aminopeptidase activity is stimulated by LTA(4). In terms of biological role, aminopeptidase that preferentially cleaves di- and tripeptides. Also has low epoxide hydrolase activity (in vitro). Can hydrolyze the epoxide leukotriene LTA(4) but it forms preferentially 5,6-dihydroxy-7,9,11,14-eicosatetraenoic acid rather than the cytokine leukotriene B(4) as the product compared to the homologous mammalian enzyme (in vitro). In Saccharomyces cerevisiae (strain YJM789) (Baker's yeast), this protein is Leucine aminopeptidase 2.